Consider the following 208-residue polypeptide: Ribosomal RNA large subunit methyltransferase E (208 aa).

Positions 63, 65, 83, 99, and 124 each coordinate S-adenosyl-L-methionine. The Proton acceptor role is filled by K164.

It belongs to the class I-like SAM-binding methyltransferase superfamily. RNA methyltransferase RlmE family.

It localises to the cytoplasm. It catalyses the reaction uridine(2552) in 23S rRNA + S-adenosyl-L-methionine = 2'-O-methyluridine(2552) in 23S rRNA + S-adenosyl-L-homocysteine + H(+). Functionally, specifically methylates the uridine in position 2552 of 23S rRNA at the 2'-O position of the ribose in the fully assembled 50S ribosomal subunit. This chain is Ribosomal RNA large subunit methyltransferase E, found in Salmonella typhi.